A 622-amino-acid chain; its full sequence is Prothrombin (622 aa).

A signal peptide spans 1 to 24; it reads MAHVRGLQLPGCLALAALCSLVHS. Positions 25 to 43 are excised as a propeptide; that stretch reads QHVFLAPQQARSLLQRVRR. A Gla domain is found at 44–89; that stretch reads ANTFLEEVRKGNLERECVEETCSYEEAFEALESSTATDVFWAKYTA. 10 positions are modified to 4-carboxyglutamate: Glu-49, Glu-50, Glu-57, Glu-59, Glu-62, Glu-63, Glu-68, Glu-69, Glu-72, and Glu-75. The cysteines at positions 60 and 65 are disulfide-linked. Intrachain disulfides connect Cys-90–Cys-103, Cys-108–Cys-186, Cys-129–Cys-169, Cys-157–Cys-181, Cys-213–Cys-291, Cys-234–Cys-274, Cys-262–Cys-286, Cys-336–Cys-482, Cys-391–Cys-407, Cys-536–Cys-550, and Cys-564–Cys-594. 2 Kringle domains span residues 108–186 and 213–291; these read CAEG…IPVC and CVPD…LNYC. Residues Asn-121 and Asn-143 are each glycosylated (N-linked (GlcNAc...) (complex) asparagine). The region spanning 364-618 is the Peptidase S1 domain; that stretch reads IVEGSDAEIG…LKKWIQKVID (255 aa). The Charge relay system role is filled by His-406. N-linked (GlcNAc...) (complex) asparagine glycosylation is present at Asn-416. Asp-462 acts as the Charge relay system in catalysis. Positions 551–573 are high affinity receptor-binding region which is also known as the TP508 peptide; that stretch reads AGYKPDEGKRGDACEGDSGGPFV. The active-site Charge relay system is Ser-568.

The protein belongs to the peptidase S1 family. Heterodimer (named alpha-thrombin) of a light and a heavy chain; disulfide-linked. Forms a heterodimer with SERPINA5. In plasma, interacts (via N-terminus) with alpha-1-microglobulin with molar ratio 1:2 and 1:1; this interaction does not prevent the activation of prothrombin to thrombin. Interacts (thrombin) with iripin-8, a serine protease inhibitor from Ixodes ricinus saliva. Interacts (thrombin) with iripin-3, a serine protease inhibitor from Ixodes ricinus saliva. Interacts (thrombin) with Anopheles albimanus salivary thrombin inhibitor anophelin; the interaction results in thrombin inhibition. Interacts (thrombin) with Anopheles gambiae salivary thrombin inhibitor anophelin; the interaction results in thrombin inhibition. Interacts (thrombin) with Amblyomma variegatum variegin; the interaction results in thrombin inhibition. Interacts (thrombin) with Xenopsylla cheopis salivary thrombin inhibitor XC-42. Interacts (thrombin) with Xenopsylla cheopis salivary thrombin inhibitor XC-43. Post-translationally, the gamma-carboxyglutamyl residues, which bind calcium ions, result from the carboxylation of glutamyl residues by a microsomal enzyme, the vitamin K-dependent carboxylase. The modified residues are necessary for the calcium-dependent interaction with a negatively charged phospholipid surface, which is essential for the conversion of prothrombin to thrombin. N-glycosylated. N-glycan heterogeneity at Asn-121: Hex3HexNAc3 (minor), Hex4HexNAc3 (minor) and Hex5HexNAc4 (major). At Asn-143: Hex4HexNAc3 (minor) and Hex5HexNAc4 (major). In terms of processing, in the penultimate step of the coagulation cascade, prothrombin is converted to thrombin by the prothrombinase complex composed of factor Xa (F10), cofactor Va (F5), and phospholipids. This activation requires factor Xa-catalyzed sequential cleavage at 2 sites, Arg-314 and Arg-363, along 2 possible pathways. In the first pathway, the first cleavage occurs at Arg-314, leading to the formation of the inactive intermediate prethrombin-2. This pathway preferentially occurs on platelets and in the absence of cofactor Va. In the second pathway, the first cleavage occurs at Arg-363, which separates protease domain into 2 chains that remain connected through a disulfide bond and generates the active intermediate meizothrombin. The presence of cofactor Va directs activation along the meizothrombin pathway and greatly accelerates the rate of cleavage at Arg-363, but has a smaller effect on the cleavage of meizothrombin at Arg-314. Meizothrombin accumulates as an intermediate when prothrombinase is assembled on the membrane of red blood cells. In terms of tissue distribution, expressed by the liver and secreted in plasma.

The protein resides in the secreted. It localises to the extracellular space. The enzyme catalyses Selective cleavage of Arg-|-Gly bonds in fibrinogen to form fibrin and release fibrinopeptides A and B.. With respect to regulation, activity is promoted in the presence of negatively charged surfaces, such as polyphosphate and dextran sulfate. Inhibited by SERPINA5. Its function is as follows. Thrombin, which cleaves bonds after Arg and Lys, converts fibrinogen to fibrin and activates factors V, VII, VIII, XIII, and, in complex with thrombomodulin, protein C. Functions in blood homeostasis, inflammation and wound healing. Activates coagulation factor XI (F11); activation is promoted by the contact with negatively charged surfaces. Triggers the production of pro-inflammatory cytokines, such as MCP-1/CCL2 and IL8/CXCL8, in endothelial cells. This Homo sapiens (Human) protein is Prothrombin (F2).